We begin with the raw amino-acid sequence, 144 residues long: Large ribosomal subunit protein uL15 (144 aa).

The segment covering 1-12 (MRLNTLSPSLGS) has biased composition (polar residues). The disordered stretch occupies residues 1–51 (MRLNTLSPSLGSRKNHKRLGRGIGSGFGKTAGRGHKGQKSRSGGHVNRGFE). The span at 21 to 31 (RGIGSGFGKTA) shows a compositional bias: gly residues.

It belongs to the universal ribosomal protein uL15 family. As to quaternary structure, part of the 50S ribosomal subunit.

Its function is as follows. Binds to the 23S rRNA. This Buchnera aphidicola subsp. Schizaphis graminum (strain Sg) protein is Large ribosomal subunit protein uL15.